Here is a 618-residue protein sequence, read N- to C-terminus: MAGSFVTTLNDPRAFDIAQALLDGFNRHYKLFRQTSAEAKQRFEAADWHGQQRAQRERIEFYDLRVDEAAERLENEFRASSLSEETWQQVKLYYIGLLINHHQPELAETFFNSVTTKILHRSYFRNDFIFVRPAVSTEYIENEEPDSLPTYRAYYPSRPGSAEGLRETLLRIVDNYQLQREFEDLGRDIDYVLQAFRNQFGDVKLSANFQIQVLASLFFRNKGAYIVGKVINGFRETGFALPVLHNSRELLTIDTALFGEDELLLLFSFARAYFLVDMEIPSAYVQFLRSLMPRKPRWELYNALGLQKQGKNQFYRDFLYHLRHSSDSFRIAPGIKGMVMLVFDLPSFPFVFKVIKDFYPPQKDTTRELIQSKYQLVKTHDRVGRMADSLEYSNVAFPRQRFEPELIEEIRHFCPSLLEEEGDSLVLKHLYIERRMIPLNIYLQEATPEQMKHAVIEYGNAIKDLVAANIFPGDMLWKNFGVTRHGKVVFYDYDEIEYLTDCNFRKVPEPRTEEEEMSGDIWYSVGPKDVFPETFGPFLLGNPTVREVFMQHHAELLDPAFWQGRKDRIAGGYVHDVFPYDPHKRFRRPLGLGFGSLDAEAVSLHPASATTQLGHNPI.

Residues 332-338 and Lys353 contribute to the ATP site; that span reads APGIKGM. Asp388 is an active-site residue.

Belongs to the AceK family.

The protein localises to the cytoplasm. The catalysed reaction is L-seryl-[isocitrate dehydrogenase] + ATP = O-phospho-L-seryl-[isocitrate dehydrogenase] + ADP + H(+). Bifunctional enzyme which can phosphorylate or dephosphorylate isocitrate dehydrogenase (IDH) on a specific serine residue. This is a regulatory mechanism which enables bacteria to bypass the Krebs cycle via the glyoxylate shunt in response to the source of carbon. When bacteria are grown on glucose, IDH is fully active and unphosphorylated, but when grown on acetate or ethanol, the activity of IDH declines drastically concomitant with its phosphorylation. The chain is Isocitrate dehydrogenase kinase/phosphatase from Methylibium petroleiphilum (strain ATCC BAA-1232 / LMG 22953 / PM1).